The following is a 209-amino-acid chain: NADH-quinone oxidoreductase subunit C (209 aa).

Belongs to the complex I 30 kDa subunit family. As to quaternary structure, NDH-1 is composed of 14 different subunits. Subunits NuoB, C, D, E, F, and G constitute the peripheral sector of the complex.

It localises to the cell inner membrane. The catalysed reaction is a quinone + NADH + 5 H(+)(in) = a quinol + NAD(+) + 4 H(+)(out). Functionally, NDH-1 shuttles electrons from NADH, via FMN and iron-sulfur (Fe-S) centers, to quinones in the respiratory chain. The immediate electron acceptor for the enzyme in this species is believed to be ubiquinone. Couples the redox reaction to proton translocation (for every two electrons transferred, four hydrogen ions are translocated across the cytoplasmic membrane), and thus conserves the redox energy in a proton gradient. In Xanthobacter autotrophicus (strain ATCC BAA-1158 / Py2), this protein is NADH-quinone oxidoreductase subunit C.